A 420-amino-acid chain; its full sequence is Glucose-1-phosphate adenylyltransferase (420 aa).

Residues tyrosine 107, glycine 173, 188–189 (EK), and serine 206 each bind alpha-D-glucose 1-phosphate.

This sequence belongs to the bacterial/plant glucose-1-phosphate adenylyltransferase family. Homotetramer.

The catalysed reaction is alpha-D-glucose 1-phosphate + ATP + H(+) = ADP-alpha-D-glucose + diphosphate. It participates in glycan biosynthesis; glycogen biosynthesis. Functionally, involved in the biosynthesis of ADP-glucose, a building block required for the elongation reactions to produce glycogen. Catalyzes the reaction between ATP and alpha-D-glucose 1-phosphate (G1P) to produce pyrophosphate and ADP-Glc. The polypeptide is Glucose-1-phosphate adenylyltransferase (Shewanella baltica (strain OS185)).